We begin with the raw amino-acid sequence, 169 residues long: Lipoprotein signal peptidase (169 aa).

4 helical membrane passes run 15-35, 47-67, 75-95, and 107-127; these read WLWL…VVMN, ILPF…SFLS, WLFT…MSKL, and AMII…GFVV. Residues Asp-128 and Asp-146 contribute to the active site. A helical membrane pass occupies residues 141 to 161; that stretch reads AFNLADMAICLGAAMIILDGF.

This sequence belongs to the peptidase A8 family.

It is found in the cell inner membrane. The enzyme catalyses Release of signal peptides from bacterial membrane prolipoproteins. Hydrolyzes -Xaa-Yaa-Zaa-|-(S,diacylglyceryl)Cys-, in which Xaa is hydrophobic (preferably Leu), and Yaa (Ala or Ser) and Zaa (Gly or Ala) have small, neutral side chains.. Its pathway is protein modification; lipoprotein biosynthesis (signal peptide cleavage). This protein specifically catalyzes the removal of signal peptides from prolipoproteins. This Vibrio parahaemolyticus serotype O3:K6 (strain RIMD 2210633) protein is Lipoprotein signal peptidase.